A 271-amino-acid chain; its full sequence is DNA-directed RNA polymerase subunit Rpo3 (271 aa).

This sequence belongs to the archaeal Rpo3/eukaryotic RPB3 RNA polymerase subunit family. In terms of assembly, part of the RNA polymerase complex.

It is found in the cytoplasm. It carries out the reaction RNA(n) + a ribonucleoside 5'-triphosphate = RNA(n+1) + diphosphate. Functionally, DNA-dependent RNA polymerase (RNAP) catalyzes the transcription of DNA into RNA using the four ribonucleoside triphosphates as substrates. This Picrophilus torridus (strain ATCC 700027 / DSM 9790 / JCM 10055 / NBRC 100828 / KAW 2/3) protein is DNA-directed RNA polymerase subunit Rpo3.